Consider the following 335-residue polypeptide: ATP-dependent 6-phosphofructokinase (335 aa).

Position 11 (G11) interacts with ATP. R21–R25 is an ADP binding site. ATP contacts are provided by residues R72 to Y73 and G102 to S105. Position 103 (D103) interacts with Mg(2+). T125–D127 lines the substrate pocket. The Proton acceptor role is filled by D127. R154 lines the ADP pocket. Residues R162 and M169 to R171 contribute to the substrate site. Residues G185 to D187 and K213 to H215 each bind ADP. Residues E222, R244, and H250–R253 contribute to the substrate site.

Belongs to the phosphofructokinase type A (PFKA) family. ATP-dependent PFK group I subfamily. Prokaryotic clade 'B1' sub-subfamily. In terms of assembly, homotetramer. Mg(2+) is required as a cofactor.

Its subcellular location is the cytoplasm. The catalysed reaction is beta-D-fructose 6-phosphate + ATP = beta-D-fructose 1,6-bisphosphate + ADP + H(+). The protein operates within carbohydrate degradation; glycolysis; D-glyceraldehyde 3-phosphate and glycerone phosphate from D-glucose: step 3/4. With respect to regulation, allosterically activated by ADP and other diphosphonucleosides, and allosterically inhibited by phosphoenolpyruvate. Its function is as follows. Catalyzes the phosphorylation of D-fructose 6-phosphate to fructose 1,6-bisphosphate by ATP, the first committing step of glycolysis. The chain is ATP-dependent 6-phosphofructokinase from Streptococcus pneumoniae (strain ATCC BAA-255 / R6).